We begin with the raw amino-acid sequence, 308 residues long: Isoaspartyl peptidase/L-asparaginase (308 aa).

Met1 is subject to N-acetylmethionine. Thr168 (nucleophile) is an active-site residue. Substrate-binding positions include 196-199 and 219-222; these read RVGD and TGHG.

It belongs to the Ntn-hydrolase family. Heterodimer of an alpha and beta chain produced by autocleavage. This heterodimer may then dimerize in turn, giving rise to a heterotetramer. In terms of processing, cleaved into an alpha and beta chain by autocatalysis; this activates the enzyme. The N-terminal residue of the beta subunit is responsible for the nucleophile hydrolase activity.

It is found in the cytoplasm. The catalysed reaction is L-asparagine + H2O = L-aspartate + NH4(+). It catalyses the reaction Cleavage of a beta-linked Asp residue from the N-terminus of a polypeptide.. Functionally, has both L-asparaginase and beta-aspartyl peptidase activity. May be involved in the production of L-aspartate, which can act as an excitatory neurotransmitter in some brain regions. Is highly active with L-Asp beta-methyl ester. Besides, has catalytic activity toward beta-aspartyl dipeptides and their methyl esters, including beta-L-Asp-L-Phe, beta-L-Asp-L-Phe methyl ester (aspartame), beta-L-Asp-L-Ala, beta-L-Asp-L-Leu and beta-L-Asp-L-Lys. Does not have aspartylglucosaminidase activity and is inactive toward GlcNAc-L-Asn. Likewise, has no activity toward glutamine. In Bos taurus (Bovine), this protein is Isoaspartyl peptidase/L-asparaginase (ASRGL1).